We begin with the raw amino-acid sequence, 285 residues long: Bifunctional protein FolD (285 aa).

NADP(+)-binding positions include 166-168 and isoleucine 232; that span reads GAS.

This sequence belongs to the tetrahydrofolate dehydrogenase/cyclohydrolase family. Homodimer.

It catalyses the reaction (6R)-5,10-methylene-5,6,7,8-tetrahydrofolate + NADP(+) = (6R)-5,10-methenyltetrahydrofolate + NADPH. The enzyme catalyses (6R)-5,10-methenyltetrahydrofolate + H2O = (6R)-10-formyltetrahydrofolate + H(+). The protein operates within one-carbon metabolism; tetrahydrofolate interconversion. Catalyzes the oxidation of 5,10-methylenetetrahydrofolate to 5,10-methenyltetrahydrofolate and then the hydrolysis of 5,10-methenyltetrahydrofolate to 10-formyltetrahydrofolate. This chain is Bifunctional protein FolD, found in Pseudoalteromonas atlantica (strain T6c / ATCC BAA-1087).